Reading from the N-terminus, the 184-residue chain is NADH-quinone oxidoreductase subunit B (184 aa).

[4Fe-4S] cluster contacts are provided by C37, C38, C103, and C132.

This sequence belongs to the complex I 20 kDa subunit family. As to quaternary structure, NDH-1 is composed of 14 different subunits. Subunits NuoB, C, D, E, F, and G constitute the peripheral sector of the complex. [4Fe-4S] cluster is required as a cofactor.

The protein resides in the cell membrane. It carries out the reaction a quinone + NADH + 5 H(+)(in) = a quinol + NAD(+) + 4 H(+)(out). Its function is as follows. NDH-1 shuttles electrons from NADH, via FMN and iron-sulfur (Fe-S) centers, to quinones in the respiratory chain. The immediate electron acceptor for the enzyme in this species is believed to be a menaquinone. Couples the redox reaction to proton translocation (for every two electrons transferred, four hydrogen ions are translocated across the cytoplasmic membrane), and thus conserves the redox energy in a proton gradient. In Rhodococcus jostii (strain RHA1), this protein is NADH-quinone oxidoreductase subunit B.